We begin with the raw amino-acid sequence, 1306 residues long: Receptor-type tyrosine-protein phosphatase C (1306 aa).

The signal sequence occupies residues 1 to 25; that stretch reads MTMYLWLKLLAFGFAFLDTEVFVTG. Residues 26–577 are Extracellular-facing; sequence QSPTPSPTGL…LHHSTSYNSK (552 aa). A disordered region spans residues 28–163; sequence PTPSPTGLTT…TASTFPTDPV (136 aa). Polar residues-rich tracts occupy residues 52–61 and 70–131; these read THTTAFSPAS and SETT…SGSA. N-linked (GlcNAc...) asparagine glycans are attached at residues N80, N92, N97, N186, N192, N199, N234, N262, N272, and N278. An N-linked (GlcNAc...) asparagine; atypical glycan is attached at N286. N337, N380, N421, N470, N490, and N531 each carry an N-linked (GlcNAc...) asparagine glycan. Fibronectin type-III domains follow at residues 391–483 and 484–576; these read SPGE…TKSA and PPSQ…SYNS. The helical transmembrane segment at 578–598 threads the bilayer; the sequence is ALIAFLAFLIIVTSIALLVVL. At 599–1306 the chain is on the cytoplasmic side; sequence YKIYDLHKKR…PASPALNQGS (708 aa). Tyrosine-protein phosphatase domains lie at 653-912 and 944-1228; these read FLAE…LVEY and LEAE…IAST. Y683 carries the post-translational modification Phosphotyrosine. Substrate is bound by residues D821, 853–859, and Q897; that span reads CSAGVGR. C853 (phosphocysteine intermediate) is an active-site residue. Phosphoserine occurs at positions 975, 994, 997, 1001, 1004, 1005, and 1009. The tract at residues 993–1014 is disordered; the sequence is MSKESEHDSDESSDDDSDSEEP. Acidic residues predominate over residues 999 to 1012; sequence HDSDESSDDDSDSE. Catalysis depends on C1169, which acts as the Phosphocysteine intermediate. Residues 1261–1306 are disordered; the sequence is CVNPLGAPEKLPEAKEQAEGSEPTSGTEGPEHSVNGPASPALNQGS. Phosphoserine is present on S1299.

It belongs to the protein-tyrosine phosphatase family. Receptor class 1/6 subfamily. Binds GANAB and PRKCSH. Interacts with SKAP1. Interacts with DPP4; the interaction is enhanced in an interleukin-12-dependent manner in activated lymphocytes. Interacts with CD53; this interaction stabilizes PTPRC on the membrane and is required for optimal phosphatase activity. As to quaternary structure, interacts with CLEC10A. In terms of assembly, does not interact with CLEC10A. (Microbial infection) Interacts with human cytomegalovirus protein UL11; the interaction is required for binding of UL11 to T-cells. Heavily N- and O-glycosylated. As to expression, isoform 1: Detected in thymocytes. Isoform 2: Detected in thymocytes. Isoform 3: Detected in thymocytes. Isoform 4: Not detected in thymocytes. Isoform 5: Detected in thymocytes. Isoform 6: Not detected in thymocytes. Isoform 7: Detected in thymocytes. Isoform 8: Not detected in thymocytes.

Its subcellular location is the cell membrane. The protein resides in the membrane raft. The protein localises to the synapse. It catalyses the reaction O-phospho-L-tyrosyl-[protein] + H2O = L-tyrosyl-[protein] + phosphate. Functionally, protein tyrosine-protein phosphatase required for T-cell activation through the antigen receptor. Acts as a positive regulator of T-cell coactivation upon binding to DPP4. The first PTPase domain has enzymatic activity, while the second one seems to affect the substrate specificity of the first one. Upon T-cell activation, recruits and dephosphorylates SKAP1 and FYN. Dephosphorylates LYN, and thereby modulates LYN activity. Interacts with CLEC10A at antigen presenting cell-T cell contact; CLEC10A on immature dendritic cells recognizes Tn antigen-carrying PTPRC/CD45 receptor on effector T cells and modulates T cell activation threshold to limit autoreactivity. Its function is as follows. (Microbial infection) Acts as a receptor for human cytomegalovirus protein UL11 and mediates binding of UL11 to T-cells, leading to reduced induction of tyrosine phosphorylation of multiple signaling proteins upon T-cell receptor stimulation and impaired T-cell proliferation. The chain is Receptor-type tyrosine-protein phosphatase C from Homo sapiens (Human).